The chain runs to 490 residues: Keratin, type II cytoskeletal 8 (490 aa).

Over residues 1–27 (MSIRVTQKSYKMSTSGPRAFSSRSFTS) the composition is skewed to polar residues. The interval 1 to 48 (MSIRVTQKSYKMSTSGPRAFSSRSFTSGPGARISSSSFSRVGSSSSSF) is disordered. The tract at residues 1–96 (MSIRVTQKSY…DPNIQAVRTQ (96 aa)) is head. S9 carries the post-translational modification Phosphoserine; by PKC/PRKCE. K11 participates in a covalent cross-link: Glycyl lysine isopeptide (Lys-Gly) (interchain with G-Cter in SUMO2). 4 positions are modified to phosphoserine: S13, S15, S21, and S22. R23 bears the Omega-N-methylarginine mark. The residue at position 24 (S24) is a Phosphoserine; by PKC/PRKCE. T26 is subject to Phosphothreonine. S27 is modified (phosphoserine). R32 carries the omega-N-methylarginine modification. A phosphoserine mark is found at S34, S37, and S39. The segment covering 34–48 (SSSSFSRVGSSSSSF) has biased composition (low complexity). Position 40 is an omega-N-methylarginine (R40). 3 positions are modified to phosphoserine: S43, S44, and S47. R49 carries the post-translational modification Asymmetric dimethylarginine; alternate. Position 49 is an omega-N-methylarginine; alternate (R49). A Phosphoserine modification is found at S51. The residue at position 80 (S80) is a Phosphoserine; by MAPK. Residues 97-132 (EKEQIKSLNNKFASFIDKVRFLEQQNKMLETKWSLL) are coil 1A. In terms of domain architecture, IF rod spans 97-408 (EKEQIKSLNN…KLLEGEESRL (312 aa)). K107 bears the N6-malonyllysine mark. Glycyl lysine isopeptide (Lys-Gly) (interchain with G-Cter in SUMO2) cross-links involve residues K128 and K136. A linker 1 region spans residues 133–149 (QQQKTSRSNMDNMFESY). The interval 150 to 241 (INNLRRQLEA…QIHEEEIREL (92 aa)) is coil 1B. Residue K203 forms a Glycyl lysine isopeptide (Lys-Gly) (interchain with G-Cter in SUMO1); alternate linkage. A Glycyl lysine isopeptide (Lys-Gly) (interchain with G-Cter in SUMO2); alternate cross-link involves residue K203. K213 is modified (N6-acetyllysine). The interval 242-265 (QSQISDTSVVLSMDNSRSLDMDGI) is linker 12. A phosphoserine mark is found at S259 and S280. A coil 2 region spans residues 266 to 403 (IAEVRAQYED…ITTYRKLLEG (138 aa)). Residues 267–387 (AEVRAQYEDI…REYQELMNVK (121 aa)) form a necessary for interaction with PNN region. K291 participates in a covalent cross-link: Glycyl lysine isopeptide (Lys-Gly) (interchain with G-Cter in SUMO2). A Glycyl lysine isopeptide (Lys-Gly) (interchain with G-Cter in SUMO2); alternate cross-link involves residue K301. K301 carries the post-translational modification N6-acetyllysine; alternate. K310 is covalently cross-linked (Glycyl lysine isopeptide (Lys-Gly) (interchain with G-Cter in SUMO2)). K331 participates in a covalent cross-link: Glycyl lysine isopeptide (Lys-Gly) (interchain with G-Cter in SUMO2); alternate. An N6-acetyllysine; alternate modification is found at K331. Phosphoserine is present on S336. A Glycyl lysine isopeptide (Lys-Gly) (interchain with G-Cter in SUMO2) cross-link involves residue K399. Residues 404–490 (EESRLESGMQ…VSESSDVVSK (87 aa)) are tail. S406, S410, S416, S423, S430, S432, and S438 each carry phosphoserine. Residue K479 forms a Glycyl lysine isopeptide (Lys-Gly) (interchain with G-Cter in SUMO1); alternate linkage. K479 participates in a covalent cross-link: Glycyl lysine isopeptide (Lys-Gly) (interchain with G-Cter in SUMO2); alternate. A phosphoserine mark is found at S482, S484, S485, and S489.

This sequence belongs to the intermediate filament family. In terms of assembly, heterotetramer of two type I and two type II keratins. Forms a heterodimer with KRT18. Associates with KRT20. Interacts with PLEC isoform 1C, when in a heterodimer with KRT18. Interacts with PNN. When associated with KRT19, interacts with DMD. Interacts with TCHP. Interacts with APEX1. Interacts with GPER1. Interacts with EPPK1. Interacts with PKP1 and PKP2. Phosphorylation on serine residues is enhanced during EGF stimulation and mitosis. Ser-80 phosphorylation plays an important role in keratin filament reorganization. In terms of processing, O-glycosylated. O-GlcNAcylation at multiple sites increases solubility, and decreases stability by inducing proteasomal degradation. Post-translationally, O-glycosylated (O-GlcNAcylated), in a cell cycle-dependent manner. In terms of tissue distribution, expressed in abundance in the epithelia of colon, bladder, ileum, and stomach, with lower expression observed in earskin (at protein level). Also expressed in pancreas, liver, dudenum and jejunum.

It is found in the cytoplasm. The protein localises to the nucleus. Its subcellular location is the nucleoplasm. It localises to the nucleus matrix. Together with KRT19, helps to link the contractile apparatus to dystrophin at the costameres of striated muscle. The protein is Keratin, type II cytoskeletal 8 (Krt8) of Mus musculus (Mouse).